Here is an 87-residue protein sequence, read N- to C-terminus: Spore morphogenesis and germination protein YwcE (87 aa).

3 helical membrane-spanning segments follow: residues 1–21 (MMDMFFAYLLVASATPLFIWL), 26–46 (VALSAIPPIILMWVFFFFYAT), and 56–76 (LMIILFAVNVIVAHIAAFIIY).

This sequence belongs to the YwcE family.

The protein localises to the cell membrane. Its subcellular location is the spore membrane. It is found in the spore outer membrane. In terms of biological role, required for proper spore morphogenesis. Important for spore germination. The chain is Spore morphogenesis and germination protein YwcE (ywcE) from Bacillus subtilis (strain 168).